The primary structure comprises 368 residues: Putative alcohol dehydrogenase D (368 aa).

Positions 40, 61, 91, 94, 97, 105, and 167 each coordinate Zn(2+).

The protein belongs to the zinc-containing alcohol dehydrogenase family. It depends on Zn(2+) as a cofactor.

The catalysed reaction is a primary alcohol + NAD(+) = an aldehyde + NADH + H(+). The enzyme catalyses a secondary alcohol + NAD(+) = a ketone + NADH + H(+). Its function is as follows. Required for maintaining the appropriate mycolic acid composition and permeability of the envelope on its exposure to acidic pH. The sequence is that of Putative alcohol dehydrogenase D (adhD) from Mycobacterium tuberculosis (strain CDC 1551 / Oshkosh).